Here is a 577-residue protein sequence, read N- to C-terminus: Type I restriction enzyme MjaVII methylase subunit (577 aa).

Residues 251-256 (EVYTPV), 281-283 (SGT), glutamate 306, and 335-336 (DS) contribute to the S-adenosyl-L-methionine site.

It belongs to the N4/N6-methyltransferase family. In terms of assembly, the type I restriction/modification system is composed of three polypeptides R, M and S.

The catalysed reaction is a 2'-deoxyadenosine in DNA + S-adenosyl-L-methionine = an N(6)-methyl-2'-deoxyadenosine in DNA + S-adenosyl-L-homocysteine + H(+). The subtype gamma methyltransferase (M) subunit of a type I restriction enzyme. The M and S subunits together form a methyltransferase (MTase) that methylates A-3 on the top and bottom strands of the sequence 5'-CAAN(7)TGG-3'. In the presence of the R subunit the complex can also act as an endonuclease, binding to the same target sequence but cutting the DNA some distance from this site. Whether the DNA is cut or modified depends on the methylation state of the target sequence. When the target site is unmodified, the DNA is cut. When the target site is hemimethylated, the complex acts as a maintenance MTase modifying the DNA so that both strands become methylated. After locating a non-methylated recognition site, the enzyme complex serves as a molecular motor that translocates DNA in an ATP-dependent manner until a collision occurs that triggers cleavage. This is Type I restriction enzyme MjaVII methylase subunit from Methanocaldococcus jannaschii (strain ATCC 43067 / DSM 2661 / JAL-1 / JCM 10045 / NBRC 100440) (Methanococcus jannaschii).